The chain runs to 339 residues: Phenylalanine--tRNA ligase alpha subunit (339 aa).

Glutamate 254 is a Mg(2+) binding site.

This sequence belongs to the class-II aminoacyl-tRNA synthetase family. Phe-tRNA synthetase alpha subunit type 1 subfamily. In terms of assembly, tetramer of two alpha and two beta subunits. The cofactor is Mg(2+).

The protein resides in the cytoplasm. The catalysed reaction is tRNA(Phe) + L-phenylalanine + ATP = L-phenylalanyl-tRNA(Phe) + AMP + diphosphate + H(+). The polypeptide is Phenylalanine--tRNA ligase alpha subunit (Dictyoglomus thermophilum (strain ATCC 35947 / DSM 3960 / H-6-12)).